A 506-amino-acid polypeptide reads, in one-letter code: MKEYQVYLERARSRQQDFLYPLIFREYIYGLAYSQNFNRSIFVENLGYDNKYSLLIVKRLITRMYQQNHLIISANDSNKNPFLGYNKNFYSQIISEGFAIVVEIPFFLELSSSLEEPEIIKSYKNVRSIHSIFPFLEDKLTHLNYVSDIRIPYPIHLEILVQILRYWVKDAPFFHLLRLFLYNFCNWNSFITTKKSISTFSKSNPRLFLFLYHFYVCEYESIFLFLRNKSSHLRLKSFSVFFERIFFYAKREHLVEVFAKDFSYTLTFFKDPLIHYVRYQGKCILASKNAPFLMNKWKHYFIHLWQGFFDVWSQPRTININQLSEHSFQLLGYFLNVRLNRSVVRSQMLQNTFLIEIVSKKLDIIVPIIPLIRSLAKAKFCNVLGHPISKPVWADSSDFDIIDRFLRICRNLSHYYNGSSKKKSLYQIKYILRLSCIKTLACKHKSTVRAFLKRSGSEELLEAFFTEEEEILSLIFPRDSSTLHRLNRNRIWYLDILFSNDLVNDE.

This sequence belongs to the intron maturase 2 family. MatK subfamily.

The protein resides in the plastid. The protein localises to the chloroplast. Functionally, usually encoded in the trnK tRNA gene intron. Probably assists in splicing its own and other chloroplast group II introns. This is Maturase K from Melilotus indicus (Sourclover).